The primary structure comprises 154 residues: Xanthine-guanine phosphoribosyltransferase (154 aa).

5-phospho-alpha-D-ribose 1-diphosphate contacts are provided by residues 37-38, arginine 69, and 88-96; these read RG and EDLVDSGDT. Arginine 69 lines the GMP pocket. Aspartate 89 contacts Mg(2+). Guanine-binding residues include aspartate 92 and isoleucine 135. 2 residues coordinate xanthine: aspartate 92 and isoleucine 135. GMP-binding positions include 92–96 and 134–135; these read DSGDT and WI.

Belongs to the purine/pyrimidine phosphoribosyltransferase family. XGPT subfamily. As to quaternary structure, homotetramer. The cofactor is Mg(2+).

It is found in the cell inner membrane. The enzyme catalyses GMP + diphosphate = guanine + 5-phospho-alpha-D-ribose 1-diphosphate. The catalysed reaction is XMP + diphosphate = xanthine + 5-phospho-alpha-D-ribose 1-diphosphate. It catalyses the reaction IMP + diphosphate = hypoxanthine + 5-phospho-alpha-D-ribose 1-diphosphate. Its pathway is purine metabolism; GMP biosynthesis via salvage pathway; GMP from guanine: step 1/1. It participates in purine metabolism; XMP biosynthesis via salvage pathway; XMP from xanthine: step 1/1. Its function is as follows. Purine salvage pathway enzyme that catalyzes the transfer of the ribosyl-5-phosphate group from 5-phospho-alpha-D-ribose 1-diphosphate (PRPP) to the N9 position of the 6-oxopurines guanine and xanthine to form the corresponding ribonucleotides GMP (guanosine 5'-monophosphate) and XMP (xanthosine 5'-monophosphate), with the release of PPi. To a lesser extent, also acts on hypoxanthine. The protein is Xanthine-guanine phosphoribosyltransferase of Vibrio atlanticus (strain LGP32) (Vibrio splendidus (strain Mel32)).